A 419-amino-acid chain; its full sequence is Gamma-glutamyl phosphate reductase (419 aa).

It belongs to the gamma-glutamyl phosphate reductase family.

The protein resides in the cytoplasm. It catalyses the reaction L-glutamate 5-semialdehyde + phosphate + NADP(+) = L-glutamyl 5-phosphate + NADPH + H(+). Its pathway is amino-acid biosynthesis; L-proline biosynthesis; L-glutamate 5-semialdehyde from L-glutamate: step 2/2. Catalyzes the NADPH-dependent reduction of L-glutamate 5-phosphate into L-glutamate 5-semialdehyde and phosphate. The product spontaneously undergoes cyclization to form 1-pyrroline-5-carboxylate. The chain is Gamma-glutamyl phosphate reductase from Caulobacter sp. (strain K31).